Reading from the N-terminus, the 584-residue chain is Putative sel1-like repeat-containing protein L18 (584 aa).

6 Sel1-like repeats span residues 132-167, 168-203, 204-237, 238-273, 274-309, and 316-351; these read SMAQ…DQNN, KYGL…CQNF, SKAQ…NQNH, SSAQ…SQGL, NSAK…YDDG, and EVAM…NTKN.

In Acanthamoeba polyphaga (Amoeba), this protein is Putative sel1-like repeat-containing protein L18.